The chain runs to 110 residues: Large ribosomal subunit protein uL22 (110 aa).

This sequence belongs to the universal ribosomal protein uL22 family. In terms of assembly, part of the 50S ribosomal subunit.

Functionally, this protein binds specifically to 23S rRNA; its binding is stimulated by other ribosomal proteins, e.g. L4, L17, and L20. It is important during the early stages of 50S assembly. It makes multiple contacts with different domains of the 23S rRNA in the assembled 50S subunit and ribosome. Its function is as follows. The globular domain of the protein is located near the polypeptide exit tunnel on the outside of the subunit, while an extended beta-hairpin is found that lines the wall of the exit tunnel in the center of the 70S ribosome. The protein is Large ribosomal subunit protein uL22 of Cellvibrio japonicus (strain Ueda107) (Pseudomonas fluorescens subsp. cellulosa).